The following is a 222-amino-acid chain: Putative O-methyltransferase MAP_2558 (222 aa).

S-adenosyl-L-methionine contacts are provided by residues valine 49, glutamate 71, 73 to 74 (GT), serine 79, aspartate 97, and isoleucine 98. Aspartate 145 lines the substrate pocket. Aspartate 147 serves as a coordination point for S-adenosyl-L-methionine.

Belongs to the class I-like SAM-binding methyltransferase superfamily. Cation-dependent O-methyltransferase family.

This chain is Putative O-methyltransferase MAP_2558, found in Mycolicibacterium paratuberculosis (strain ATCC BAA-968 / K-10) (Mycobacterium paratuberculosis).